Here is a 130-residue protein sequence, read N- to C-terminus: Larval cuticle protein 1 (130 aa).

The first 16 residues, 1-16 (MFKFVMICAVLGLAVA), serve as a signal peptide directing secretion. Residues 43 to 104 (ADGFDSSLHT…PSGAWIPTPP (62 aa)) enclose the Chitin-binding type R&amp;R domain.

Functionally, component of the larval cuticle. This chain is Larval cuticle protein 1 (Lcp1), found in Drosophila melanogaster (Fruit fly).